Consider the following 399-residue polypeptide: 1-deoxy-D-xylulose 5-phosphate reductoisomerase (399 aa).

Residues Thr11, Gly12, Ser13, Ile14, Gly37, Asn39, and Asn125 each contribute to the NADPH site. Lys126 lines the 1-deoxy-D-xylulose 5-phosphate pocket. Glu127 provides a ligand contact to NADPH. Mn(2+) is bound at residue Asp151. 1-deoxy-D-xylulose 5-phosphate-binding residues include Ser152, Glu153, Ser177, and His200. Glu153 is a Mn(2+) binding site. Gly206 serves as a coordination point for NADPH. 1-deoxy-D-xylulose 5-phosphate-binding residues include Ser213, Asn218, Lys219, and Glu222. Residue Glu222 participates in Mn(2+) binding.

The protein belongs to the DXR family. The cofactor is Mg(2+). Mn(2+) serves as cofactor.

It catalyses the reaction 2-C-methyl-D-erythritol 4-phosphate + NADP(+) = 1-deoxy-D-xylulose 5-phosphate + NADPH + H(+). It functions in the pathway isoprenoid biosynthesis; isopentenyl diphosphate biosynthesis via DXP pathway; isopentenyl diphosphate from 1-deoxy-D-xylulose 5-phosphate: step 1/6. Functionally, catalyzes the NADPH-dependent rearrangement and reduction of 1-deoxy-D-xylulose-5-phosphate (DXP) to 2-C-methyl-D-erythritol 4-phosphate (MEP). This chain is 1-deoxy-D-xylulose 5-phosphate reductoisomerase, found in Nostoc sp. (strain PCC 7120 / SAG 25.82 / UTEX 2576).